The chain runs to 4092 residues: Dynein heavy chain, cytoplasmic (4092 aa).

The tract at residues M1–Q1757 is stem. Coiled-coil stretches lie at residues V154–H175, K486–T508, K542–E566, V932–E959, Y1042–M1063, and K1681–Y1705. AAA regions lie at residues Y1758–N1979, Q2036–V2273, S2379–G2628, and T2722–V2984. ATP contacts are provided by residues G1796–T1803, G2074–T2081, G2418–T2425, and G2760–T2767. Coiled coils occupy residues I2993–E3092, K3242–T3300, and I3532–F3608. The interval I2993–T3300 is stalk. AAA regions lie at residues L3370–K3599 and L3760–N3970.

The protein belongs to the dynein heavy chain family. As to quaternary structure, the dynein complex consists of at least two heavy chains and a number of intermediate and light chains. Interacts with DYN3.

The protein resides in the cytoplasm. Its subcellular location is the cytoskeleton. Its function is as follows. Cytoplasmic dynein acts as a motor for the intracellular retrograde motility of vesicles and organelles along microtubules. Dynein has ATPase activity; the force-producing power stroke is thought to occur on release of ADP. Required to maintain uniform nuclear distribution in hyphae. May play an important role in the proper orientation of the mitotic spindle into the budding daughter cell yeast. Probably required for normal progression of the cell cycle. The polypeptide is Dynein heavy chain, cytoplasmic (DYN1) (Saccharomyces cerevisiae (strain ATCC 204508 / S288c) (Baker's yeast)).